The primary structure comprises 162 residues: Interleukin-15 (162 aa).

Residues 1–29 (MRILKPYLRSTSIQCYLCLLLNSHFLTEA) form the signal peptide. Residues 30–48 (GIHVFILGCISAGLPKTEA) constitute a propeptide that is removed on maturation. 2 cysteine pairs are disulfide-bonded: cysteine 83/cysteine 133 and cysteine 90/cysteine 136. N-linked (GlcNAc...) asparagine glycosylation is found at asparagine 113, asparagine 121, and asparagine 127.

It belongs to the IL-15/IL-21 family.

The protein resides in the secreted. Cytokine that plays a major role in the development of inflammatory and protective immune responses to microbial invaders and parasites by modulating immune cells of both the innate and adaptive immune systems. Stimulates the proliferation of natural killer cells, T-cells and B-cells and promotes the secretion of several cytokines. In monocytes, induces the production of IL8 and monocyte chemotactic protein 1/CCL2, two chemokines that attract neutrophils and monocytes respectively to sites of infection. Unlike most cytokines, which are secreted in soluble form, IL15 is expressed in association with its high affinity IL15RA on the surface of IL15-producing cells and delivers signals to target cells that express IL2RB and IL2RG receptor subunits. Binding to its receptor triggers the phosphorylation of JAK1 and JAK3 and the recruitment and subsequent phosphorylation of signal transducer and activator of transcription-3/STAT3 and STAT5. In mast cells, induces the rapid tyrosine phosphorylation of STAT6 and thereby controls mast cell survival and release of cytokines such as IL4. This is Interleukin-15 (IL15) from Bubalus bubalis (Domestic water buffalo).